The following is a 241-amino-acid chain: Tetraspanin-1 (241 aa).

The Cytoplasmic segment spans residues 1–11 (MGCFNFIKVMM). The helical transmembrane segment at 12-32 (ILFNMLIFLCGAALLAVGIWV) threads the bilayer. Residues 33–52 (SVDGPSFVKIFGPMSSSAMQ) lie on the Extracellular side of the membrane. A helical membrane pass occupies residues 53–73 (FVNVGYFLIAAGAVLFALGFL). The Cytoplasmic portion of the chain corresponds to 74-88 (GCYGAQTESKCALMT). The helical transmembrane segment at 89-109 (FFFILLLIFIAEVAAAVVALV) threads the bilayer. Topologically, residues 110–211 (YTTLAENFLT…KQLLYDIRTN (102 aa)) are extracellular. Asn-141, Asn-154, Asn-167, Asn-180, Asn-189, and Asn-194 each carry an N-linked (GlcNAc...) asparagine glycan. Residues 212–232 (AVTVGGVAAGIGGLELAAMIV) traverse the membrane as a helical segment. Residues 233 to 241 (SMYLYCNLE) are Cytoplasmic-facing.

Belongs to the tetraspanin (TM4SF) family. In terms of assembly, interacts with SLC19A2. Interacts with NTRK1/TRKA.

The protein localises to the lysosome membrane. Structural component of specialized membrane microdomains known as tetraspanin-enriched microdomains (TERMs), which act as platforms for receptor clustering and signaling. Participates thereby in diverse biological functions such as cell signal transduction, adhesion, migration and protein trafficking. Regulates neuronal differentiation in response to NGF by facilitating NGF-mediated activation of NTRK1/TRKA receptor tyrosine kinase and subsequent downstream signaling pathways. Plays a role in the inhibition of TNFalpha-induced apoptosis. Mechanistically, inhibits the NF-kappa-B signaling pathway by blocking phosphorylation of CHUK. Also promotes the stability of the thiamine transporter 1/SLC19A2 in intestinal epithelial cells leading to an increase of thiamine uptake process. The chain is Tetraspanin-1 (TSPAN1) from Bos taurus (Bovine).